We begin with the raw amino-acid sequence, 796 residues long: Probable phosphoketolase (796 aa).

This sequence belongs to the XFP family. It depends on thiamine diphosphate as a cofactor.

This chain is Probable phosphoketolase, found in Clostridium acetobutylicum (strain ATCC 824 / DSM 792 / JCM 1419 / IAM 19013 / LMG 5710 / NBRC 13948 / NRRL B-527 / VKM B-1787 / 2291 / W).